The following is a 527-amino-acid chain: Tubulin-specific chaperone E (527 aa).

Serine 2 bears the N-acetylserine mark. The CAP-Gly domain maps to 27–71 (GVVPPVAGPWLGVEWDNPERGKHDGSHEGTVYFKCRHPTGGSFIR). LRR repeat units lie at residues 154 to 175 (NIRK…IHIA), 180 to 200 (HLEV…SVLT), 205 to 226 (VLKV…RCVA), 230 to 252 (GLEE…DVLQ), 253 to 274 (TVKL…YLIA), 278 to 299 (RLEQ…DAGI), and 308 to 329 (SLKY…NELE). The LRRCT domain occupies 342–384 (NPLTKEDKEAETARLLIIASIGQLKTLNKCEILPEERRRAELD). Residue lysine 463 is modified to N6-acetyllysine. Residue serine 495 is modified to Phosphoserine.

It belongs to the TBCE family. In terms of assembly, supercomplex made of cofactors A to E. Cofactors A and D function by capturing and stabilizing tubulin in a quasi-native conformation. Cofactor E binds to the cofactor D-tubulin complex; interaction with cofactor C then causes the release of tubulin polypeptides that are committed to the native state. Cofactors B and E can form a heterodimer which binds to alpha-tubulin and enhances their ability to dissociate tubulin heterodimers. Interacts with TBCD.

It is found in the cytoplasm. It localises to the cytoskeleton. Its function is as follows. Tubulin-folding protein; involved in the second step of the tubulin folding pathway and in the regulation of tubulin heterodimer dissociation. Required for correct organization of microtubule cytoskeleton and mitotic splindle, and maintenance of the neuronal microtubule network. This Homo sapiens (Human) protein is Tubulin-specific chaperone E (TBCE).